The primary structure comprises 87 residues: Small ribosomal subunit protein uS15c (87 aa).

The disordered stretch occupies residues 1–20 (MNQNLSIRKRNKLKQDSGSP).

This sequence belongs to the universal ribosomal protein uS15 family. In terms of assembly, part of the 30S ribosomal subunit.

The protein resides in the plastid. The protein localises to the chloroplast. The polypeptide is Small ribosomal subunit protein uS15c (rps15) (Zygnema circumcarinatum (Green alga)).